We begin with the raw amino-acid sequence, 177 residues long: Large ribosomal subunit protein uL6 (177 aa).

The protein belongs to the universal ribosomal protein uL6 family. As to quaternary structure, part of the 50S ribosomal subunit.

In terms of biological role, this protein binds to the 23S rRNA, and is important in its secondary structure. It is located near the subunit interface in the base of the L7/L12 stalk, and near the tRNA binding site of the peptidyltransferase center. This chain is Large ribosomal subunit protein uL6, found in Delftia acidovorans (strain DSM 14801 / SPH-1).